The primary structure comprises 1850 residues: Vitellogenin-2 (1850 aa).

An N-terminal signal peptide occupies residues 1–15 (MRGIILALVLTLVGS). Positions 24–662 (FNSRRSYLYN…SPRTMFPSAI (639 aa)) constitute a Vitellogenin domain. N-linked (GlcNAc...) asparagine glycosylation occurs at asparagine 604. A disordered region spans residues 935 to 984 (DAPLDVTEEPFQTSERASREHFAMQGPDSMPRKQSHSSREDLRRSTGKRA). An N-linked (GlcNAc...) asparagine glycan is attached at asparagine 1094. Disordered stretches follow at residues 1115–1313 (GTEP…SSSS) and 1338–1362 (EFPK…SHDT). A compositionally biased stretch (low complexity) spans 1122-1143 (TSSSSSSASSTATSSSSSSASS). Positions 1156-1165 (DQVKQARNKD) are enriched in basic and acidic residues. Residues 1167-1266 (SSSSRSSKSS…SRSSSSSSKS (100 aa)) are compositionally biased toward low complexity. N-linked (GlcNAc...) asparagine glycosylation is found at asparagine 1177 and asparagine 1188. Residues 1267 to 1277 (SSHHSHSHHSG) show a composition bias toward basic residues. The segment covering 1278–1291 (HLNGSSSSSSSSRS) has biased composition (low complexity). The N-linked (GlcNAc...) asparagine glycan is linked to asparagine 1280. Over residues 1338 to 1350 (EFPKRKLPGDRAT) the composition is skewed to basic and acidic residues. Residues asparagine 1417, asparagine 1597, and asparagine 1665 are each glycosylated (N-linked (GlcNAc...) asparagine). The VWFD domain maps to 1579–1756 (ARCSVSYNKI…SWILEEAPCR (178 aa)). 2 disulfides stabilise this stretch: cysteine 1581-cysteine 1719 and cysteine 1604-cysteine 1755.

Phosvitin, an egg yolk storage protein, is one of the most highly phosphorylated (10%) proteins in nature. Post-translationally, cathepsin D is responsible for intraoocytic processing of vitellogenin. In terms of processing, may contain intrachain disulfide bonds. As to expression, after incorporation from serum via a specific receptor, it is cleaved into four fragments, heavy and light chain lipovitellins, phosphovitin and YGP40, and YGP40 is released into the yolk plasma before or during compartmentation of lipovitellin-phosvitin complex into the yolk granule.

Its function is as follows. Precursor of the major egg-yolk proteins that are sources of nutrients during early development of oviparous organisms. In terms of biological role, phosvitin is believed to be of importance in sequestering calcium, iron and other cations for the developing embryo. The protein is Vitellogenin-2 (VTG2) of Gallus gallus (Chicken).